A 127-amino-acid polypeptide reads, in one-letter code: Aspartate 1-decarboxylase (127 aa).

Ser-25 functions as the Schiff-base intermediate with substrate; via pyruvic acid in the catalytic mechanism. Position 25 is a pyruvic acid (Ser) (Ser-25). Position 57 (Thr-57) interacts with substrate. The active-site Proton donor is Tyr-58. 73-75 is a substrate binding site; it reads GAA.

It belongs to the PanD family. In terms of assembly, heterooctamer of four alpha and four beta subunits. Requires pyruvate as cofactor. Post-translationally, is synthesized initially as an inactive proenzyme, which is activated by self-cleavage at a specific serine bond to produce a beta-subunit with a hydroxyl group at its C-terminus and an alpha-subunit with a pyruvoyl group at its N-terminus.

It localises to the cytoplasm. It catalyses the reaction L-aspartate + H(+) = beta-alanine + CO2. It participates in cofactor biosynthesis; (R)-pantothenate biosynthesis; beta-alanine from L-aspartate: step 1/1. Catalyzes the pyruvoyl-dependent decarboxylation of aspartate to produce beta-alanine. This Staphylococcus aureus (strain JH1) protein is Aspartate 1-decarboxylase.